Consider the following 54-residue polypeptide: Ovomucoid (54 aa).

The Kazal-like domain occupies 4 to 54 (VDCSDYPKPACTLEYMPLCGSDNKTYGNKCNFCNAVVDSNGTLTLSHFGKC). Disulfide bonds link C6-C36, C14-C33, and C22-C54. The N-linked (GlcNAc...) asparagine glycan is linked to N43.

The protein localises to the secreted. The protein is Ovomucoid of Dendrocygna arcuata (Wandering whistling-duck).